Reading from the N-terminus, the 379-residue chain is Chaperone protein DnaJ (379 aa).

The J domain occupies 5 to 70; the sequence is DYYEILEVSR…EKRAAYDRYG (66 aa). The CR-type zinc-finger motif lies at 135–213; the sequence is GIKVPISYVT…CGGSGRVRNE (79 aa). Residues C148, C151, C165, C168, C187, C190, C201, and C204 each contribute to the Zn(2+) site. CXXCXGXG motif repeat units lie at residues 148–155, 165–172, 187–194, and 201–208; these read CSSCSGIG, CGNCNGAG, CNVCNGEG, and CRRCGGSG.

It belongs to the DnaJ family. Homodimer. Requires Zn(2+) as cofactor.

The protein resides in the cytoplasm. Its function is as follows. Participates actively in the response to hyperosmotic and heat shock by preventing the aggregation of stress-denatured proteins and by disaggregating proteins, also in an autonomous, DnaK-independent fashion. Unfolded proteins bind initially to DnaJ; upon interaction with the DnaJ-bound protein, DnaK hydrolyzes its bound ATP, resulting in the formation of a stable complex. GrpE releases ADP from DnaK; ATP binding to DnaK triggers the release of the substrate protein, thus completing the reaction cycle. Several rounds of ATP-dependent interactions between DnaJ, DnaK and GrpE are required for fully efficient folding. Also involved, together with DnaK and GrpE, in the DNA replication of plasmids through activation of initiation proteins. The protein is Chaperone protein DnaJ of Anaplasma marginale (strain Florida).